The primary structure comprises 161 residues: Large ribosomal subunit protein uL16 (161 aa).

Belongs to the universal ribosomal protein uL16 family.

This is Large ribosomal subunit protein uL16 from Methanosphaera stadtmanae (strain ATCC 43021 / DSM 3091 / JCM 11832 / MCB-3).